A 204-amino-acid chain; its full sequence is Synaptosomal-associated protein 25-A (204 aa).

Residues M1–L11 show a composition bias toward basic and acidic residues. The disordered stretch occupies residues M1–S25. T-SNARE coiled-coil homology domains are found at residues D19 to L81 and D138 to M200.

It belongs to the SNAP-25 family. As to expression, expressed in several regions throughout the adult brain, including the mesencephalon.

It is found in the synapse. The protein localises to the synaptosome. Its subcellular location is the cell membrane. Functionally, may play an important role in the synaptic function of specific neuronal systems. Associates with proteins involved in vesicle docking and membrane fusion. This chain is Synaptosomal-associated protein 25-A, found in Danio rerio (Zebrafish).